The following is a 552-amino-acid chain: Steroid transmembrane transporter SLC22A24 (552 aa).

Transmembrane regions (helical) follow at residues 16–36, 144–164, 178–198, 204–224, 235–255, 267–287, 350–370, 378–398, 407–427, 435–455, 469–489, and 496–516; these read FQIL…PHML, LISV…LIFG, CCLL…TFPV, FLGG…MSEW, GIIL…GFVI, IPLF…QWLI, IFYL…LMLN, IFLF…AVLL, ISQM…IFLS, VALA…HTVH, IGLN…LMIL, and LPWI…LLLP. A disordered region spans residues 524-552; sequence PNTIQDVENNRRDSRKTKQEDISMKVTQF. The span at 531–546 shows a compositional bias: basic and acidic residues; that stretch reads ENNRRDSRKTKQEDIS.

This sequence belongs to the major facilitator (TC 2.A.1) superfamily. Organic cation transporter (TC 2.A.1.19) family.

The protein resides in the cell membrane. It catalyses the reaction estrone 3-sulfate(out) + glutarate(in) = estrone 3-sulfate(in) + glutarate(out). It carries out the reaction 17beta-estradiol 17-O-(beta-D-glucuronate)(out) + glutarate(in) = 17beta-estradiol 17-O-(beta-D-glucuronate)(in) + glutarate(out). The catalysed reaction is taurocholate(out) + glutarate(in) = taurocholate(in) + glutarate(out). The enzyme catalyses glycocholate(out) + glutarate(in) = glycocholate(in) + glutarate(out). It catalyses the reaction dehydroepiandrosterone 3-sulfate(out) + glutarate(in) = dehydroepiandrosterone 3-sulfate(in) + glutarate(out). It carries out the reaction glutarate(in) + succinate(out) = glutarate(out) + succinate(in). Renal transmembrane organic anion/dicarboxylate exchanger that participates in the reabsorption of conjugated steroids, as well as bile acids, driven by an outward gradient of dicarboxylates such as glutarate or succinate. Transports taurocholate, estrone 3-sulfate, and estradiol-17-glucuronide (17beta-estradiol 17-O-(beta-D-glucuronate)), but not androstanediol glucuronide (5alpha-androstane-3alpha,17beta-diol 3-O-(beta-D-glucuronate)). In Equus caballus (Horse), this protein is Steroid transmembrane transporter SLC22A24.